We begin with the raw amino-acid sequence, 304 residues long: D-alanine--D-alanine ligase (304 aa).

In terms of domain architecture, ATP-grasp spans 107–300; it reads KRLWQGSGLP…FDELVARILG (194 aa). 134 to 186 provides a ligand contact to ATP; that stretch reads VGYPVIVKPAREGSSLGMSRVEGPEELAEAYRVAAAYDDTVLAEAWVEGEEYT. Residues aspartate 254, glutamate 267, and asparagine 269 each coordinate Mg(2+).

It belongs to the D-alanine--D-alanine ligase family. Mg(2+) serves as cofactor. It depends on Mn(2+) as a cofactor.

Its subcellular location is the cytoplasm. It catalyses the reaction 2 D-alanine + ATP = D-alanyl-D-alanine + ADP + phosphate + H(+). The protein operates within cell wall biogenesis; peptidoglycan biosynthesis. Functionally, cell wall formation. The chain is D-alanine--D-alanine ligase from Halorhodospira halophila (strain DSM 244 / SL1) (Ectothiorhodospira halophila (strain DSM 244 / SL1)).